The chain runs to 3674 residues: Dystrophin-1 (3674 aa).

The tract at residues 1–25 (MLFSGASTAKPKKDEKKDKKSDRDP) is disordered. A compositionally biased stretch (basic and acidic residues) spans 11–25 (PKKDEKKDKKSDRDP). The interval 30 to 39 (QEWVFVRWAN) is actin-binding. In terms of domain architecture, Calponin-homology (CH) spans 129-234 (EKLSEAIKQW…YLMSLYLAMI (106 aa)). The tract at residues 265–325 (SQPSTSSSSA…KSGKSKKARR (61 aa)) is disordered. Spectrin repeat units lie at residues 327-435 (EQLA…VLQQ), 436-541 (QIHL…KLDG), and 612-656 (CELV…TLVK). Residues 655–674 (VKSGKADVKQVQESQNEQKE) are compositionally biased toward basic and acidic residues. 5 disordered regions span residues 655 to 689 (VKSG…TEGE), 968 to 991 (NSQM…EKRR), 1587 to 1606 (ASAE…SSPS), 1796 to 1833 (LSAT…SRSS), and 2387 to 2466 (MNDS…GSTG). A compositionally biased stretch (polar residues) spans 675-685 (QPASSEGLSTD). Basic and acidic residues predominate over residues 975 to 991 (TVEKAETRKAEMEEKRR). The span at 1796 to 1830 (LSATEKKPVETVKSTIPDRPEVPEEPEKSSPDRTS) shows a compositional bias: basic and acidic residues. Residues 2391-2411 (GGDTTESRSTVVEMTSVHTKQ) are compositionally biased toward polar residues. 4 Spectrin repeats span residues 2576–2673 (RNEM…VLEA), 2725–2789 (FKTL…RLEK), 2792–2905 (QEWE…RLKK), and 2926–3032 (QRLQ…AVRN). The region spanning 3047–3081 (QSVTLPWQRAISKSNLLPYYIEQTSEKTQWEHPVW) is the WW domain. The ZZ-type zinc-finger motif lies at 3301 to 3357 (KHASKCNVCKMFPIIGIRYRCLTCFNCDLCQNCFFSQRTAKSHRTNHPMQEYCEKTT). Positions 3306, 3309, 3321, 3324, 3330, 3333, 3343, and 3347 each coordinate Zn(2+). Disordered stretches follow at residues 3481-3522 (STME…TQSQ) and 3568-3645 (KQQA…QMQN). A compositionally biased stretch (polar residues) spans 3568–3579 (KQQAPLSTNSLL).

As to quaternary structure, component of the dystrophin glycoprotein complex (DGC). Interacts with dyb-1 and stn-1 to form the DGC. Interacts with stn-2. Expressed in body wall, head, pharyngeal and vulval muscles, from late embryogenesis to adulthood (at protein level).

The protein localises to the cell membrane. The protein resides in the sarcolemma. It localises to the cytoplasm. Its subcellular location is the cytoskeleton. Plays a role in cholinergic transmission and as a functional partner of dystrobrevin (dyb-1), necessary for muscle maintenance. Required for neuronal positioning. May play a role in the localization of slo-1 near dense bodies in the muscle. The sequence is that of Dystrophin-1 (dys-1) from Caenorhabditis elegans.